The sequence spans 258 residues: UDP-2,3-diacylglucosamine hydrolase (258 aa).

Mn(2+)-binding residues include aspartate 15, histidine 17, aspartate 48, asparagine 88, and histidine 123. Asparagine 88 to arginine 89 provides a ligand contact to substrate. Substrate contacts are provided by aspartate 131, serine 169, asparagine 173, lysine 176, and histidine 204. Mn(2+)-binding residues include histidine 204 and histidine 206.

It belongs to the LpxH family. Mn(2+) is required as a cofactor.

The protein resides in the cell inner membrane. It catalyses the reaction UDP-2-N,3-O-bis[(3R)-3-hydroxytetradecanoyl]-alpha-D-glucosamine + H2O = 2-N,3-O-bis[(3R)-3-hydroxytetradecanoyl]-alpha-D-glucosaminyl 1-phosphate + UMP + 2 H(+). It functions in the pathway glycolipid biosynthesis; lipid IV(A) biosynthesis; lipid IV(A) from (3R)-3-hydroxytetradecanoyl-[acyl-carrier-protein] and UDP-N-acetyl-alpha-D-glucosamine: step 4/6. In terms of biological role, hydrolyzes the pyrophosphate bond of UDP-2,3-diacylglucosamine to yield 2,3-diacylglucosamine 1-phosphate (lipid X) and UMP by catalyzing the attack of water at the alpha-P atom. Involved in the biosynthesis of lipid A, a phosphorylated glycolipid that anchors the lipopolysaccharide to the outer membrane of the cell. The protein is UDP-2,3-diacylglucosamine hydrolase of Bordetella pertussis (strain Tohama I / ATCC BAA-589 / NCTC 13251).